Consider the following 441-residue polypeptide: Asparagine--tRNA ligase, mitochondrial (441 aa).

It belongs to the class-II aminoacyl-tRNA synthetase family.

The protein localises to the mitochondrion. The enzyme catalyses tRNA(Asn) + L-asparagine + ATP = L-asparaginyl-tRNA(Asn) + AMP + diphosphate + H(+). This Schizosaccharomyces pombe (strain 972 / ATCC 24843) (Fission yeast) protein is Asparagine--tRNA ligase, mitochondrial (slm5).